The sequence spans 1796 residues: U3 small nucleolar RNA-associated protein 10 (1796 aa).

HEAT repeat units follow at residues 586-623 (LDLQAMIPYCVAALSDPAKKVRQAAADLITVLSKSNAE), 656-692 (LLQEIIVPALEESVLDEEHISNVLRSHLQSTKDSATG), 861-898 (DLTTNILNAFLESLQDIPKITTDSPATKRRRTSSSDHS), 983-1021 (DTSVGHGDVLVQCIQKSSSPAVQNSALLLVASLANTAPD), 1052-1089 (QTIKEVIPPLVETFRKSRRNLVTSAAELLSSFVIAYEH), 1161-1198 (QPKPTLAATLFNRNTDDDQDLHKTALKELTLLPKVLSS), 1258-1295 (LSIGEFIKAVENLLDRPSISLRQKVLRTLEVRVDQESN), 1302-1340 (TVLLAFLPQLTAVIRDSDDIAYKHTAVACVDKIAEKYGK), 1344-1383 (EAVAAAATTIAGDCCLGQPDKRLRVMALLCLASLVDVLQD), 1492-1529 (SAVEEYLKLLATVLDKHPSTIIAKHISTLSTIFLSALD), 1711-1748 (DHRKELNAAVLRRLRSPSASVRLAAVRCEQSLTDTLGE), and 1752-1789 (EMLSEMLPYISELQDDDDEDVEKETHRWITKIEAILGE). Residues 881-901 (TTDSPATKRRRTSSSDHSRGV) are disordered.

The protein belongs to the HEATR1/UTP10 family. As to quaternary structure, component of the ribosomal small subunit (SSU) processome.

It is found in the nucleus. It localises to the nucleolus. Its function is as follows. Involved in nucleolar processing of pre-18S ribosomal RNA. Involved in ribosome biosynthesis. The sequence is that of U3 small nucleolar RNA-associated protein 10 from Pyricularia oryzae (strain 70-15 / ATCC MYA-4617 / FGSC 8958) (Rice blast fungus).